The primary structure comprises 348 residues: DNA ligase C1 (348 aa).

The active-site N6-AMP-lysine intermediate is lysine 32.

This sequence belongs to the ATP-dependent DNA ligase family. A divalent metal cation is required as a cofactor.

The catalysed reaction is ATP + (deoxyribonucleotide)n-3'-hydroxyl + 5'-phospho-(deoxyribonucleotide)m = (deoxyribonucleotide)n+m + AMP + diphosphate.. Its function is as follows. DNA ligase that seals nicks in double-stranded DNA during DNA replication, DNA recombination and DNA repair. Has weak intrinsic nick joining activities and accumulates DNA-adenylate. Acts as a backup for LigD in the Ku-LigD-dependent NHEJ pathway. This Mycolicibacterium smegmatis (strain ATCC 700084 / mc(2)155) (Mycobacterium smegmatis) protein is DNA ligase C1 (ligC).